Consider the following 430-residue polypeptide: 3-oxo-tetronate kinase (430 aa).

ATP-binding positions include S268, 366 to 369 (GGET), and G410.

This sequence belongs to the four-carbon acid sugar kinase family.

It carries out the reaction 3-dehydro-L-erythronate + ATP = 3-dehydro-4-O-phospho-L-erythronate + ADP + H(+). The catalysed reaction is 3-dehydro-D-erythronate + ATP = 3-dehydro-4-O-phospho-D-erythronate + ADP + H(+). Functionally, catalyzes the ATP-dependent phosphorylation of 3-oxo-tetronate to 3-oxo-tetronate 4-phosphate. The protein is 3-oxo-tetronate kinase of Pseudomonas fluorescens (strain ATCC BAA-477 / NRRL B-23932 / Pf-5).